The primary structure comprises 236 residues: tRNA (guanine-N(1)-)-methyltransferase (236 aa).

S-adenosyl-L-methionine-binding positions include G110 and 129-134 (LGDFVL).

This sequence belongs to the RNA methyltransferase TrmD family. In terms of assembly, homodimer.

It is found in the cytoplasm. It catalyses the reaction guanosine(37) in tRNA + S-adenosyl-L-methionine = N(1)-methylguanosine(37) in tRNA + S-adenosyl-L-homocysteine + H(+). Functionally, specifically methylates guanosine-37 in various tRNAs. The protein is tRNA (guanine-N(1)-)-methyltransferase of Clostridium perfringens (strain SM101 / Type A).